The sequence spans 228 residues: Dehydrin Rab25 (228 aa).

2 disordered regions span residues Met-1 to His-68 and Ala-115 to His-228. Composition is skewed to basic and acidic residues over residues Lys-169–Gln-187 and Lys-212–His-228.

It belongs to the plant dehydrin family.

In Oryza sativa subsp. japonica (Rice), this protein is Dehydrin Rab25 (RAB25).